A 28-amino-acid chain; its full sequence is Conotoxin Cl6a (28 aa).

Disulfide bonds link Cys3-Cys13, Cys7-Cys19, and Cys12-Cys24.

As to expression, expressed by the venom duct.

It is found in the secreted. The protein is Conotoxin Cl6a of Californiconus californicus (California cone).